The sequence spans 237 residues: Phosphoribosylaminoimidazole-succinocarboxamide synthase (237 aa).

It belongs to the SAICAR synthetase family.

The enzyme catalyses 5-amino-1-(5-phospho-D-ribosyl)imidazole-4-carboxylate + L-aspartate + ATP = (2S)-2-[5-amino-1-(5-phospho-beta-D-ribosyl)imidazole-4-carboxamido]succinate + ADP + phosphate + 2 H(+). The protein operates within purine metabolism; IMP biosynthesis via de novo pathway; 5-amino-1-(5-phospho-D-ribosyl)imidazole-4-carboxamide from 5-amino-1-(5-phospho-D-ribosyl)imidazole-4-carboxylate: step 1/2. This chain is Phosphoribosylaminoimidazole-succinocarboxamide synthase, found in Psychrobacter arcticus (strain DSM 17307 / VKM B-2377 / 273-4).